The chain runs to 42 residues: Photosystem I reaction center subunit IX (42 aa).

Residues tyrosine 7–isoleucine 27 traverse the membrane as a helical segment.

This sequence belongs to the PsaJ family.

The protein resides in the plastid. It is found in the chloroplast thylakoid membrane. Functionally, may help in the organization of the PsaE and PsaF subunits. The protein is Photosystem I reaction center subunit IX of Capsella bursa-pastoris (Shepherd's purse).